We begin with the raw amino-acid sequence, 144 residues long: Ig heavy chain V region MOPC 141 (144 aa).

Residues 1–19 form the signal peptide; sequence MAVLALLFCLATFPSCILS. Residues 20 to 130 form the Ig-like domain; sequence QVQLKESGPG…YYGRSDKYFT (111 aa).

The protein is Ig heavy chain V region MOPC 141 of Mus musculus (Mouse).